The sequence spans 157 residues: Endoribonuclease YbeY (157 aa).

Residues histidine 114, histidine 118, and histidine 124 each coordinate Zn(2+).

Belongs to the endoribonuclease YbeY family. The cofactor is Zn(2+).

It localises to the cytoplasm. In terms of biological role, single strand-specific metallo-endoribonuclease involved in late-stage 70S ribosome quality control and in maturation of the 3' terminus of the 16S rRNA. This is Endoribonuclease YbeY from Yersinia pestis.